Reading from the N-terminus, the 512-residue chain is Glucose-6-phosphate 1-dehydrogenase (512 aa).

NADP(+) is bound by residues Arg-61, 103-104 (EF), and Lys-171. His-201, Lys-205, Glu-239, and Asp-258 together coordinate substrate. Catalysis depends on His-263, which acts as the Proton acceptor. Substrate-binding residues include Lys-360 and Lys-365. Residues 479-512 (QDSSPSFPNYPAGSSGPKEADALIERDGRSWRPL) form a disordered region. Basic and acidic residues predominate over residues 496-512 (KEADALIERDGRSWRPL).

It belongs to the glucose-6-phosphate dehydrogenase family.

It carries out the reaction D-glucose 6-phosphate + NADP(+) = 6-phospho-D-glucono-1,5-lactone + NADPH + H(+). It participates in carbohydrate degradation; pentose phosphate pathway; D-ribulose 5-phosphate from D-glucose 6-phosphate (oxidative stage): step 1/3. Catalyzes the oxidation of glucose 6-phosphate to 6-phosphogluconolactone. This is Glucose-6-phosphate 1-dehydrogenase from Chlamydia pneumoniae (Chlamydophila pneumoniae).